We begin with the raw amino-acid sequence, 334 residues long: MRIGIDAMGGDNAPHAVIEGVALYLKENRDDEIVIFGDKNIIEEECVQKVQPLDKLEIIDCKEKIEFEDEPVKAIRQKKDSSIVVGLQYLKEGKIDAFVSAGSTGALMAGGLLIVGRIKGIDRPALTTRLPYKDGQYLLIDVGSNTDCRPINILQFAQMATVYVSKVLGKKNPTVGLLNIGTEENKGNDLSKQSYELLKSAKNINFVGNVEARSLPFSPPDIVVCDGFVGNIVLKLTEGMGLLFFDILKDIAKSSFRAQIGGLLLKPYLKRLKGKYDYKEVGGAPLLGIDGIIVKCHGSSDGQAIFSGIHQAKAFYENNVLALLKEEITAESEV.

The protein belongs to the PlsX family. In terms of assembly, homodimer. Probably interacts with PlsY.

The protein resides in the cytoplasm. The enzyme catalyses a fatty acyl-[ACP] + phosphate = an acyl phosphate + holo-[ACP]. It participates in lipid metabolism; phospholipid metabolism. In terms of biological role, catalyzes the reversible formation of acyl-phosphate (acyl-PO(4)) from acyl-[acyl-carrier-protein] (acyl-ACP). This enzyme utilizes acyl-ACP as fatty acyl donor, but not acyl-CoA. The polypeptide is Phosphate acyltransferase (Caldicellulosiruptor bescii (strain ATCC BAA-1888 / DSM 6725 / KCTC 15123 / Z-1320) (Anaerocellum thermophilum)).